The sequence spans 478 residues: Cytochrome P450 monooxygenase ATR3 (478 aa).

The helical transmembrane segment at 20 to 42 (AVAFVTASALYYVLPAAISHIQL) threads the bilayer. N-linked (GlcNAc...) asparagine glycosylation is found at N159 and N268.

It belongs to the cytochrome P450 family. Heme serves as cofactor.

Its subcellular location is the membrane. It participates in mycotoxin biosynthesis. In terms of biological role, cytochrome P450 monooxygenase; part of the core atranone cluster (CAC) which products are predicted to catalyze most or all steps of mycotoxin atranone synthesis, starting from geranylgeranyl pyrophosphate (GGPP). The initial cyclization of GGPP to dolabellane is probably performed by the terpene cyclase ATR13. The Baeyer-Villiger oxidation near the end of the atranone synthesis, which converts atranones D and E to atranones F and G is predicted to be catalyzed by the monooxygenase ATR8. Of the CAC's other predicted gene products, the reducing PKS ATR6 might synthesize a polyketide chain. This polyketide is probably transferred onto the atranone backbone by the polyketide transferase ATR5. Other predicted CAC products include 4 oxygenases (ATR2, ATR3, ATR4, and ATR14), 3 short-chain reductases (ATR7, ATR9, and ATR10), and a methyltransferase (ATR12). These may all be involved in the various steps of atranone biosynthesis, although their specific roles must await experimental determination. This is Cytochrome P450 monooxygenase ATR3 from Stachybotrys chlorohalonatus (strain IBT 40285).